We begin with the raw amino-acid sequence, 365 residues long: UPF0324 membrane protein Cj0999c (365 aa).

The next 11 helical transmembrane spans lie at 12–34 (IVRSNFKGLLFTACIVIFAMYLS), 44–63 (HLAATAFAIIIGVLLSPWFF), 83–100 (LGIVLYGFNITLTELLSV), 105–127 (FLLSAIVIFFVFIIALFVGTKIF), 134–153 (SMLVGAGSAICGAAAVLALE), 163–185 (GILAVGTVVIFGLVFMFLYPIAF), 197–219 (AMGVFMGATLHEVANVAGAAEMA), 234–256 (VIIKMMRVILLVPFLLIVTYFFA), 269–288 (SITIPYFAFAFLGMIVLNTY), 303–325 (IISLGKTLCTLCIVFAMAALGLQ), and 338–360 (VFGLAFVLGLVLIFGGYFLTLAF).

It belongs to the UPF0324 family.

The protein resides in the cell membrane. This is UPF0324 membrane protein Cj0999c from Campylobacter jejuni subsp. jejuni serotype O:2 (strain ATCC 700819 / NCTC 11168).